A 625-amino-acid chain; its full sequence is Interferon-induced GTP-binding protein Mx2 (625 aa).

Positions 29–302 constitute a Dynamin-type G domain; the sequence is DLALPAIAVI…LVFHIGRCLP (274 aa). The interval 39–46 is G1 motif; that stretch reads GDQSSGKS. GTP is bound at residue 39–46; that stretch reads GDQSSGKS. The tract at residues 64–66 is G2 motif; it reads VTR. A G3 motif region spans residues 140 to 143; sequence DLPG. GTP contacts are provided by residues 140–144 and 209–212; these read DLPGI and TKPD. The segment at 209–212 is G4 motif; sequence TKPD. Residues 241 to 244 form a G5 motif region; it reads RCRG. Residues 539-625 form the GED domain; the sequence is REELTCHLKS…TEALKYLAKF (87 aa).

The protein belongs to the TRAFAC class dynamin-like GTPase superfamily. Dynamin/Fzo/YdjA family.

It localises to the cytoplasm. This Ictalurus punctatus (Channel catfish) protein is Interferon-induced GTP-binding protein Mx2 (mx2).